Reading from the N-terminus, the 114-residue chain is MTNKTTKIQATGKYVRLSTAKTRRVLNQIKGKKYQEAILILEFMTYKPCKIIKKILESAGNNALNLKYEKQNLIIKQAFANDGPKLKRFQPRAQGRAFRIQKPTCHITINLSIN.

The protein belongs to the universal ribosomal protein uL22 family. In terms of assembly, part of the 50S ribosomal subunit.

It is found in the plastid. The protein resides in the chloroplast. Functionally, this protein binds specifically to 23S rRNA. Its function is as follows. The globular domain of the protein is located near the polypeptide exit tunnel on the outside of the subunit, while an extended beta-hairpin is found that lines the wall of the exit tunnel in the center of the 70S ribosome. The sequence is that of Large ribosomal subunit protein uL22c (rpl22) from Gracilaria tenuistipitata (Red alga).